The primary structure comprises 687 residues: Fimbrin-5 (687 aa).

The 68-residue stretch at 7-74 (VLVSDPWLQS…KSVLDKSYPN (68 aa)) folds into the EF-hand domain. 4 consecutive Calponin-homology (CH) domains span residues 122–239 (ESEK…KIQM), 267–370 (LAPE…QHRN), 392–498 (SREE…RYTM), and 513–621 (EITD…YWSL). Actin-binding regions lie at residues 122–370 (ESEK…QHRN) and 392–621 (SREE…YWSL). Residues 628-687 (ESTVSEDATDDGDANSVAGEISNLSIDGASESSPTVQDQELLTKADNDEDEVDGENNKDA) form a disordered region. Over residues 649–667 (SNLSIDGASESSPTVQDQE) the composition is skewed to polar residues.

In terms of assembly, interacts with F-actin. As to expression, expressed in mature pollen.

It localises to the cytoplasm. The protein resides in the cytoskeleton. Functionally, cross-links actin filaments (F-actin) in a calcium independent manner. Induces the formation of actin bundles. Stabilizes and prevents F-actin depolymerization mediated by latrunculin B (LatB). The protein is Fimbrin-5 of Arabidopsis thaliana (Mouse-ear cress).